We begin with the raw amino-acid sequence, 382 residues long: Galactokinase (382 aa).

Position 34–37 (34–37) interacts with substrate; sequence EHTD. 124–130 contributes to the ATP binding site; that stretch reads GAGLSSS. Positions 130 and 162 each coordinate Mg(2+). The active-site Proton acceptor is the D174. Y223 is a substrate binding site.

It belongs to the GHMP kinase family. GalK subfamily.

The protein resides in the cytoplasm. It carries out the reaction alpha-D-galactose + ATP = alpha-D-galactose 1-phosphate + ADP + H(+). It participates in carbohydrate metabolism; galactose metabolism. In terms of biological role, catalyzes the transfer of the gamma-phosphate of ATP to D-galactose to form alpha-D-galactose-1-phosphate (Gal-1-P). This chain is Galactokinase, found in Cronobacter sakazakii (strain ATCC BAA-894) (Enterobacter sakazakii).